The primary structure comprises 91 residues: RNA-binding protein Hfq (91 aa).

Residues 9–68 (DPYLNALRRERIPVSIYLVNGIKLQGQIESFDQFVILLKNTVNQMVYKHAISTVVPARSV) enclose the Sm domain. The interval 69 to 91 (SHHNNNHHTAPTEAVENVETQAE) is disordered.

It belongs to the Hfq family. Homohexamer.

In terms of biological role, RNA chaperone that binds small regulatory RNA (sRNAs) and mRNAs to facilitate mRNA translational regulation in response to envelope stress, environmental stress and changes in metabolite concentrations. Also binds with high specificity to tRNAs. This chain is RNA-binding protein Hfq, found in Haemophilus influenzae (strain ATCC 51907 / DSM 11121 / KW20 / Rd).